The following is a 91-amino-acid chain: C-C motif chemokine 5 (91 aa).

The first 23 residues, 1–23, serve as a signal peptide directing secretion; the sequence is MKVSAAALCVILTTAALCVPASA. 2 disulfide bridges follow: cysteine 33–cysteine 57 and cysteine 34–cysteine 73.

The protein belongs to the intercrine beta (chemokine CC) family.

The protein localises to the secreted. Chemoattractant for blood monocytes, memory T-helper cells and eosinophils. Causes the release of histamine from basophils and activates eosinophils. May activate several chemokine receptors including CCR1, CCR3, CCR4 and CCR5. May also be an agonist of the G protein-coupled receptor GPR75. Together with GPR75, may play a role in neuron survival through activation of a downstream signaling pathway involving the PI3, Akt and MAP kinases. By activating GPR75 may also play a role in insulin secretion by islet cells. The polypeptide is C-C motif chemokine 5 (CCL5) (Cavia porcellus (Guinea pig)).